A 202-amino-acid chain; its full sequence is MSRYRGPRVKIIRRLGALPGLTNKTPQLKSNLINQSTSNKKISQYRIRLEEKQKLRFHYGITERQLLNYVRIARKAKGSTGEVLLQLLEMRLDNVIFRLGMTPTIPGARQLVNHRHILVNDYIVDIPSYRCKPQDFITIKNQRKSESIINKNINFYQKYKIPNHLTYNSLEKKGLVNQILDRESIGLKVNELLVVEYYSRQA.

Residues 90–152 enclose the S4 RNA-binding domain; sequence MRLDNVIFRL…RKSESIINKN (63 aa).

This sequence belongs to the universal ribosomal protein uS4 family. As to quaternary structure, part of the 30S ribosomal subunit. Contacts protein S5. The interaction surface between S4 and S5 is involved in control of translational fidelity.

The protein resides in the plastid. The protein localises to the chloroplast. Its function is as follows. One of the primary rRNA binding proteins, it binds directly to 16S rRNA where it nucleates assembly of the body of the 30S subunit. Functionally, with S5 and S12 plays an important role in translational accuracy. This chain is Small ribosomal subunit protein uS4c (rps4), found in Dendrohypopterygium filiculiforme (Moss).